Reading from the N-terminus, the 105-residue chain is Large ribosomal subunit protein uL24 (105 aa).

The segment at 67 to 105 is disordered; it reads HISNLNPVDPKTGKATRIGRRKSSEGTLVRYSKKSGEEI.

The protein belongs to the universal ribosomal protein uL24 family. In terms of assembly, part of the 50S ribosomal subunit.

One of two assembly initiator proteins, it binds directly to the 5'-end of the 23S rRNA, where it nucleates assembly of the 50S subunit. Functionally, one of the proteins that surrounds the polypeptide exit tunnel on the outside of the subunit. This is Large ribosomal subunit protein uL24 from Bacteroides thetaiotaomicron (strain ATCC 29148 / DSM 2079 / JCM 5827 / CCUG 10774 / NCTC 10582 / VPI-5482 / E50).